The sequence spans 222 residues: UPF0758 protein YicR (222 aa).

Positions 100 to 222 (PLLSPEMTRE…YVSFAERGWI (123 aa)) constitute an MPN domain. Residues H171, H173, and D184 each coordinate Zn(2+). Residues 171–184 (HNHPSGCAEPSKAD) carry the JAMM motif motif.

The protein belongs to the UPF0758 family. YicR subfamily.

This Escherichia coli O45:K1 (strain S88 / ExPEC) protein is UPF0758 protein YicR.